The sequence spans 663 residues: Putative glucosamine-6-phosphate deaminase-like protein BT_0258 (663 aa).

The interval 1–290 (MKTNLSSQIT…NLTRIQRPWL (290 aa)) is glucosamine-6-phosphate deaminase-like. Glu-184 is an active-site residue.

The protein in the N-terminal section; belongs to the glucosamine/galactosamine-6-phosphate isomerase family. NagB subfamily.

In Bacteroides thetaiotaomicron (strain ATCC 29148 / DSM 2079 / JCM 5827 / CCUG 10774 / NCTC 10582 / VPI-5482 / E50), this protein is Putative glucosamine-6-phosphate deaminase-like protein BT_0258.